The sequence spans 475 residues: UDP-glucosyltransferase UGT13248 (475 aa).

Low complexity predominate over residues 1 to 17; sequence METTVTAVSGTTSSSVG. Residues 1–20 are disordered; that stretch reads METTVTAVSGTTSSSVGHGA. Residues His-38, Ser-152, Thr-299, Cys-352, 369–377, and 393–394 each bind UDP-alpha-D-glucose; these read HCGWNSTLE and DQ.

It belongs to the UDP-glycosyltransferase family.

Functionally, involved in the detoxification of the Fusarium mycotoxin deoxynivalenol by the transfer of glucose from UDP-D-glucose to the hydroxyl group at C-3, forming deoxynivalenol-3-O-beta-D-glucoside. The sequence is that of UDP-glucosyltransferase UGT13248 from Hordeum vulgare subsp. vulgare (Domesticated barley).